The following is a 341-amino-acid chain: Anthranilate phosphoribosyltransferase (341 aa).

Residues G81, 84–85, T89, 91–94, 109–117, and S121 contribute to the 5-phospho-alpha-D-ribose 1-diphosphate site; these read GD, NIST, and KHGSRSVSG. G81 serves as a coordination point for anthranilate. S93 provides a ligand contact to Mg(2+). R167 provides a ligand contact to anthranilate. Positions 226 and 227 each coordinate Mg(2+).

Belongs to the anthranilate phosphoribosyltransferase family. As to quaternary structure, homodimer. The cofactor is Mg(2+).

It carries out the reaction N-(5-phospho-beta-D-ribosyl)anthranilate + diphosphate = 5-phospho-alpha-D-ribose 1-diphosphate + anthranilate. It functions in the pathway amino-acid biosynthesis; L-tryptophan biosynthesis; L-tryptophan from chorismate: step 2/5. Functionally, catalyzes the transfer of the phosphoribosyl group of 5-phosphorylribose-1-pyrophosphate (PRPP) to anthranilate to yield N-(5'-phosphoribosyl)-anthranilate (PRA). The polypeptide is Anthranilate phosphoribosyltransferase (Methylococcus capsulatus (strain ATCC 33009 / NCIMB 11132 / Bath)).